An 84-amino-acid chain; its full sequence is Large ribosomal subunit protein bL27 (84 aa).

The tract at residues 1 to 22 (MAHKKAGGSTRNGRDSESKRLG) is disordered.

Belongs to the bacterial ribosomal protein bL27 family.

In Shewanella loihica (strain ATCC BAA-1088 / PV-4), this protein is Large ribosomal subunit protein bL27.